The primary structure comprises 926 residues: Peripheral plasma membrane protein CASK (926 aa).

A Protein kinase domain is found at 12–276; the sequence is YELCEVIGKG…VYEALNHPWL (265 aa). ATP contacts are provided by residues 18 to 26 and Lys41; that span reads IGKGPFSVV. Residue Ser51 is modified to Phosphoserine. Asp141 is an active-site residue. Ser151 and Ser155 each carry phosphoserine; by autocatalysis. At Thr182 the chain carries Phosphothreonine. The segment at 305-315 is calmodulin-binding; that stretch reads KGAVLAAVSSH. Residue Ser313 is modified to Phosphoserine. L27 domains are found at residues 343–398 and 402–455; these read AERA…SPQI and PSDA…YSDE. The segment at 482-909 is required for interaction with NRXN1 (via C-terminal tail); it reads MENVTRVRLV…DETIRHLEEA (428 aa). The 82-residue stretch at 490-571 folds into the PDZ domain; sequence LVQFQKNTDE…SITFKIVPSY (82 aa). 2 positions are modified to phosphoserine: Ser570 and Tyr571. Residues 574 to 610 form a disordered region; the sequence is QSSSCERDSPSTSRQSPANGHSSTNNSVSDLPSTTQP. Residues 612–682 enclose the SH3 domain; the sequence is GRQIYVRAQF…PSPELQEWRV (71 aa). In terms of domain architecture, Guanylate kinase-like spans 739-911; that stretch reads RKTLVLLGAH…TIRHLEEAVE (173 aa).

This sequence in the N-terminal section; belongs to the protein kinase superfamily. CAMK Ser/Thr protein kinase family. CaMK subfamily. It belongs to the MAGUK family. As to quaternary structure, CASK and LIN7 form a tripartite complex with CASKIN1. Component of the brain-specific heterotrimeric complex (LIN-10-LIN-2-LIN-7 complex) composed of at least APBA1, CASK, and LIN7, which associates with the motor protein KIF17 to transport vesicles along microtubules. Forms a heterotrimeric complex with DLG1 and LIN7B via their L27 domains. Identified in a complex with ACTN4, IQGAP1, MAGI2, NPHS1, SPTAN1 and SPTBN1. Part of a complex containing CASK, TBR1 and TSPYL2. Interacts with WHRN. Interacts (via the PDZ, SH3 and guanylate kinase-like domains) with NRXN1 (via C-terminus). Interacts with CASKIN1, APBA1, LIN7(A/B/C), and L27 domain of DLG1 and isoform 2 of DLG4. Interacts with FCHSD2. Interacts with KIRREL3. Interacts with TBR1. Interacts with TSPYL2. Unlike other protein kinases, does not require a divalent cation such as magnesium for catalytic activity. is required as a cofactor.

It is found in the nucleus. It localises to the cytoplasm. The protein localises to the cell membrane. The enzyme catalyses L-seryl-[protein] + ATP = O-phospho-L-seryl-[protein] + ADP + H(+). The catalysed reaction is L-threonyl-[protein] + ATP = O-phospho-L-threonyl-[protein] + ADP + H(+). Differs from archetypal CaMK members in that the kinase domain exhibits a constitutively active conformation and the autoinhibitory region does not engage in direct contact with the ATP-binding cleft, although it still binds Ca(2+)/CAM. In terms of biological role, multidomain scaffolding Mg(2+)-independent protein kinase that catalyzes the phosphotransfer from ATP to proteins such as NRXN1, and plays a role in synaptic transmembrane protein anchoring and ion channel trafficking. Contributes to neural development and regulation of gene expression via interaction with the transcription factor TBR1. Binds to cell-surface proteins, including amyloid precursor protein, neurexins, and syndecans. May mediate a link between the extracellular matrix and the actin cytoskeleton via its interaction with syndecan and with the actin/spectrin-binding protein 4.1. Component of the LIN-10-LIN-2-LIN-7 complex, which associates with the motor protein KIF17 to transport vesicles containing N-methyl-D-aspartate (NMDA) receptor subunit NR2B along microtubules. This chain is Peripheral plasma membrane protein CASK, found in Mus musculus (Mouse).